Consider the following 556-residue polypeptide: Glycosyl hydrolase 5 family protein (556 aa).

Residues 1-28 form the signal peptide; sequence MTSAGVAPTALRLLTALLLLLVAAPSHS. Residues Asn102 and Asn113 are each glycosylated (N-linked (GlcNAc...) asparagine). Catalysis depends on Glu208, which acts as the Proton donor/acceptor. N-linked (GlcNAc...) asparagine glycosylation is found at Asn212, Asn290, and Asn307. Residue Glu473 is the Nucleophile of the active site. Asn474 and Asn479 each carry an N-linked (GlcNAc...) asparagine glycan.

This sequence belongs to the glycosyl hydrolase 5 (cellulase A) family. Post-translationally, glycosylated.

May have glycosyl hydrolase activity. In Chamaecyparis obtusa (Hinoki false-cypress), this protein is Glycosyl hydrolase 5 family protein.